The sequence spans 373 residues: Alpha-N-acetylgalactosaminide alpha-2,6-sialyltransferase 2 (373 aa).

The Cytoplasmic segment spans residues 1-6 (MDLPRR). A helical; Signal-anchor for type II membrane protein membrane pass occupies residues 7–27 (WLFRMLLLVATSSGILLMLYS). Residues 28-373 (SAGQQSPETQ…NAGILWLYQR (346 aa)) lie on the Lumenal side of the membrane. Intrachain disulfides connect Cys65–Cys147 and Cys150–Cys316. Residue Asn103 is glycosylated (N-linked (GlcNAc...) asparagine). CMP-N-acetyl-beta-neuraminate is bound at residue Asn155. Asn160 carries N-linked (GlcNAc...) asparagine glycosylation. The CMP-N-acetyl-beta-neuraminate site is built by Asn178, Ser303, and His335.

It belongs to the glycosyltransferase 29 family. Highly expressed in lactating mammary gland and adult testis. Lower levels in kidney.

Its subcellular location is the golgi apparatus membrane. The enzyme catalyses a beta-D-galactosyl-(1-&gt;3)-N-acetyl-alpha-D-galactosaminyl derivative + CMP-N-acetyl-beta-neuraminate = a beta-D-galactosyl-(1-&gt;3)-[N-acetyl-alpha-neuraminyl-(2-&gt;6)]-N-acetyl-alpha-D-galactosaminyl derivative + CMP + H(+). The catalysed reaction is a 3-O-[N-acetyl-alpha-D-galactosaminyl]-L-threonyl-[protein] + CMP-N-acetyl-beta-neuraminate = a 3-O-[N-acetyl-alpha-neuraminosyl-(2-&gt;6)-N-acetyl-alpha-D-galactosaminyl]-L-threonyl-[protein] + CMP + H(+). It carries out the reaction a 3-O-[N-acetyl-alpha-neuraminyl-(2-&gt;3)-beta-D-galactosyl-(1-&gt;3)-N-acetyl-alpha-D-galactosaminyl]-L-threonyl-[protein] + CMP-N-acetyl-beta-neuraminate = a 3-O-{alpha-Neu5Ac-(2-&gt;3)-beta-D-Gal-(1-&gt;3)-[alpha-Neu5Ac-(2-&gt;6)]-alpha-D-GalNAc}-L-threonyl-[protein] + CMP + H(+). Its pathway is protein modification; protein glycosylation. In terms of biological role, catalyzes the transfer of N-acetylneuraminyl groups onto glycan chains in glycoproteins. Conjugates sialic acid with an alpha-2-6 linkage to N-acetylgalactosamine (GalNAc) glycan chains linked to serine or threonine in glycoproteins. Sialylates alphaGalNAc- and Galbeta1-&gt;3GalNAc-O-Ser/Thr epitopes also known as Tn and T antigens. This is Alpha-N-acetylgalactosaminide alpha-2,6-sialyltransferase 2 (St6galnac2) from Mus musculus (Mouse).